We begin with the raw amino-acid sequence, 262 residues long: MQRLTIRDFLKKKGKEKITMLTVYDYSMAKILSETEVDGFLVGDSLGMNVLGFPSTLQVTMDHMIHHTRAVVRASPRQLIVVDMPFMSYEPSNEVAVKNAGILASEGADAVKLEGGVEVYERVANIVKFGVPVMGHIGLTPQRYLTLGGYRTVKDEAKLISDALALEEAGAFSIVIENVYAEIAKKITEKVSIPTICIGAGPHCDGQVLVIHDLLGMGDIQPYFSRKYLDLKAEIREAVKRYINDVKTGTFPGRENYKSRES.

2 residues coordinate Mg(2+): aspartate 44 and aspartate 83. 3-methyl-2-oxobutanoate contacts are provided by residues 44–45 (DS), aspartate 83, and lysine 112. Glutamate 114 contributes to the Mg(2+) binding site. Residue glutamate 177 is the Proton acceptor of the active site.

This sequence belongs to the PanB family. Homodecamer; pentamer of dimers. Mg(2+) is required as a cofactor.

The protein resides in the cytoplasm. It catalyses the reaction 3-methyl-2-oxobutanoate + (6R)-5,10-methylene-5,6,7,8-tetrahydrofolate + H2O = 2-dehydropantoate + (6S)-5,6,7,8-tetrahydrofolate. It functions in the pathway cofactor biosynthesis; coenzyme A biosynthesis. Functionally, catalyzes the reversible reaction in which hydroxymethyl group from 5,10-methylenetetrahydrofolate is transferred onto alpha-ketoisovalerate to form ketopantoate. This chain is 3-methyl-2-oxobutanoate hydroxymethyltransferase, found in Metallosphaera sedula (strain ATCC 51363 / DSM 5348 / JCM 9185 / NBRC 15509 / TH2).